Here is a 465-residue protein sequence, read N- to C-terminus: uncharacterized protein (465 aa).

Positions 1–15 (MEKNYIFENSIYKDE) are enriched in basic and acidic residues. Disordered stretches follow at residues 1 to 31 (MEKN…NNSS) and 288 to 320 (QLEK…EQLP).

This is an uncharacterized protein from Dictyostelium discoideum (Social amoeba).